Reading from the N-terminus, the 130-residue chain is Small ribosomal subunit protein uS9 (130 aa).

A disordered region spans residues 102-130 (GFLTRDPRKKERKKYGLKKARKSPQFSKR). Residues 111–130 (KERKKYGLKKARKSPQFSKR) show a composition bias toward basic residues.

The protein belongs to the universal ribosomal protein uS9 family.

The sequence is that of Small ribosomal subunit protein uS9 from Finegoldia magna (strain ATCC 29328 / DSM 20472 / WAL 2508) (Peptostreptococcus magnus).